A 493-amino-acid polypeptide reads, in one-letter code: Glutamyl-tRNA(Gln) amidotransferase subunit A (493 aa).

Residues K78 and S158 each act as charge relay system in the active site. The active-site Acyl-ester intermediate is S182.

It belongs to the amidase family. GatA subfamily. Heterotrimer of A, B and C subunits.

It carries out the reaction L-glutamyl-tRNA(Gln) + L-glutamine + ATP + H2O = L-glutaminyl-tRNA(Gln) + L-glutamate + ADP + phosphate + H(+). Functionally, allows the formation of correctly charged Gln-tRNA(Gln) through the transamidation of misacylated Glu-tRNA(Gln) in organisms which lack glutaminyl-tRNA synthetase. The reaction takes place in the presence of glutamine and ATP through an activated gamma-phospho-Glu-tRNA(Gln). This chain is Glutamyl-tRNA(Gln) amidotransferase subunit A, found in Rickettsia africae (strain ESF-5).